Here is a 139-residue protein sequence, read N- to C-terminus: Cuticle protein 76 (139 aa).

6 repeat units span residues 7–10 (AAPA), 68–71 (AAPA), 75–78 (AAPV), 93–95 (AAP), 105–108 (AAPA), and 121–124 (AAPA).

Its function is as follows. Component of the cuticle of migratory locust which contains more than 100 different structural proteins. This Locusta migratoria (Migratory locust) protein is Cuticle protein 76.